The primary structure comprises 218 residues: Thiopurine S-methyltransferase (218 aa).

Residues Trp-10, Leu-45, Glu-66, and Arg-123 each coordinate S-adenosyl-L-methionine.

Belongs to the class I-like SAM-binding methyltransferase superfamily. TPMT family.

It is found in the cytoplasm. It carries out the reaction S-adenosyl-L-methionine + a thiopurine = S-adenosyl-L-homocysteine + a thiopurine S-methylether.. This chain is Thiopurine S-methyltransferase, found in Xanthomonas axonopodis pv. citri (strain 306).